Here is a 102-residue protein sequence, read N- to C-terminus: NADH-quinone oxidoreductase subunit K (102 aa).

3 consecutive transmembrane segments (helical) span residues 6 to 26 (LEHGLAVAGILFCLGLVGLMV), 30 to 50 (ILFVLMSLEVMMNASALAFVV), and 62 to 82 (VMFILVISLAAAEASIGLAIL).

This sequence belongs to the complex I subunit 4L family. NDH-1 is composed of 13 different subunits. Subunits NuoA, H, J, K, L, M, N constitute the membrane sector of the complex.

Its subcellular location is the cell inner membrane. The enzyme catalyses a quinone + NADH + 5 H(+)(in) = a quinol + NAD(+) + 4 H(+)(out). NDH-1 shuttles electrons from NADH, via FMN and iron-sulfur (Fe-S) centers, to quinones in the respiratory chain. The immediate electron acceptor for the enzyme in this species is believed to be ubiquinone. Couples the redox reaction to proton translocation (for every two electrons transferred, four hydrogen ions are translocated across the cytoplasmic membrane), and thus conserves the redox energy in a proton gradient. This chain is NADH-quinone oxidoreductase subunit K, found in Pseudomonas putida (strain ATCC 700007 / DSM 6899 / JCM 31910 / BCRC 17059 / LMG 24140 / F1).